We begin with the raw amino-acid sequence, 71 residues long: Conotoxin LvVIB (71 aa).

The signal sequence occupies residues 1–17 (VLIIAVLFLTASELVTA). Residues 18–41 (DYTRDKWQYRAASLRDAMRNFRDT) constitute a propeptide that is removed on maturation. 3 disulfides stabilise this stretch: cysteine 43/cysteine 57, cysteine 50/cysteine 62, and cysteine 56/cysteine 69.

The protein belongs to the conotoxin O1 superfamily. As to expression, expressed by the venom duct.

It localises to the secreted. The protein is Conotoxin LvVIB of Conus lividus (Livid cone).